The sequence spans 620 residues: Transcription factor kayak (620 aa).

Disordered regions lie at residues Met-1–Val-36 and Ser-184–Arg-288. Polar residues predominate over residues Ser-184 to Asn-194. Composition is skewed to low complexity over residues Gly-201 to Asn-233 and Ala-249 to Arg-266. The bZIP domain occupies Glu-284 to His-347. Residues Lys-286–Arg-305 are basic motif. A leucine-zipper region spans residues Leu-312–Leu-340. A disordered region spans residues Ser-375–Leu-414. Residues Gly-377–Gly-405 are compositionally biased toward low complexity. Ser-422 bears the Phosphoserine mark. Disordered stretches follow at residues Gly-447–Ala-466 and Ser-590–Leu-620.

It belongs to the bZIP family. Fos subfamily. In terms of assembly, homodimer. Heterodimer with Jra. The kay-Jra heterodimer binds more stably to the AP-1 site than either of the two proteins alone.

It is found in the nucleus. Functionally, developmentally regulated transcription factor AP-1 binds and recognizes the enhancer DNA sequence: 5'-TGA[CG]TCA-3'. May play a role in the function or determination of a particular subset of cells in the developing embryo. It is able to carry out its function either independently of or in conjunction with Jra. The polypeptide is Transcription factor kayak (Drosophila willistoni (Fruit fly)).